Here is a 691-residue protein sequence, read N- to C-terminus: NADH-ubiquinone oxidoreductase 75 kDa subunit (691 aa).

Residues 1–78 enclose the 2Fe-2S ferredoxin-type domain; it reads MVNVFVDGLS…NMKIFTNTPL (78 aa). Positions 34, 45, 48, and 62 each coordinate [2Fe-2S] cluster. In terms of domain architecture, 4Fe-4S His(Cys)3-ligated-type spans 78–117; it reads LVKKAREGVLEFLLVNHPLDCPICDQGGECDLQDLTMVYG. The [4Fe-4S] cluster site is built by His-94, Cys-98, Cys-101, Cys-107, Cys-146, Cys-149, Cys-152, and Cys-196. Residues 215–271 enclose the 4Fe-4S Mo/W bis-MGD-type domain; the sequence is LQSTESIDVSDAIGSNIRIDVRGSEIMRILPRLNEDVNEEWISDKARFCYDGLKRQR.

Belongs to the complex I 75 kDa subunit family. As to quaternary structure, complex I is composed of about 30 different subunits. [2Fe-2S] cluster is required as a cofactor. [4Fe-4S] cluster serves as cofactor.

Its subcellular location is the mitochondrion inner membrane. It carries out the reaction a ubiquinone + NADH + 5 H(+)(in) = a ubiquinol + NAD(+) + 4 H(+)(out). Functionally, core subunit of the mitochondrial membrane respiratory chain NADH dehydrogenase (Complex I) that is believed to belong to the minimal assembly required for catalysis. Complex I functions in the transfer of electrons from NADH to the respiratory chain. The immediate electron acceptor for the enzyme is believed to be ubiquinone. This is the largest subunit of complex I and it is a component of the iron-sulfur (IP) fragment of the enzyme. It may form part of the active site crevice where NADH is oxidized. The polypeptide is NADH-ubiquinone oxidoreductase 75 kDa subunit (NAD11) (Reclinomonas americana).